Consider the following 152-residue polypeptide: Large-conductance mechanosensitive channel (152 aa).

The next 2 helical transmembrane spans lie at 14–34 (VIDL…VTSL) and 81–101 (GLFL…FIAI).

It belongs to the MscL family. Homopentamer.

It is found in the cell membrane. In terms of biological role, channel that opens in response to stretch forces in the membrane lipid bilayer. May participate in the regulation of osmotic pressure changes within the cell. The chain is Large-conductance mechanosensitive channel from Clostridium perfringens (strain 13 / Type A).